A 1122-amino-acid chain; its full sequence is MLRVYHSNRLDVLEALMEFIVERERLDDPFEPEMILVQSTGMAQWLQMTLSQKFGIAANIDFPLPASFIWDMFVRVLPEIPKESAFNKQSMSWKLMTLLPQLLEREDFTLLRHYLTDDSDKRKLFQLSSKAADLFDQYLVYRPDWLAQWETGHLVEGLGEAQAWQAPLWKALVEYTHQLGQPRWHRANLYQRFIETLESATTCPPGLPSRVFICGISALPPVYLQALQALGKHIEIHLLFTNPCRYYWGDIKDPAYLAKLLTRQRRHSFEDRELPLFRDSENAGQLFNSDGEQDVGNPLLASWGKLGRDYIYLLSDLESSQELDAFVDVTPDNLLHNIQSDILELENRAVAGVNIEEFSRSDNKRPLDPLDSSITFHVCHSPQREVEVLHDRLLAMLEEDPTLTPRDIIVMVADIDSYSPFIQAVFGSAPADRYLPYAISDRRARQSHPVLEAFISLLSLPDSRFVSEDVLALLDVPVLAARFDITEEGLRYLRQWVNESGIRWGIDDDNVRELELPATGQHTWRFGLTRMLLGYAMESAQGEWQSVLPYDESSGLIAELVGHLASLLMQLNIWRRGLAQERPLEEWLPVCRDMLNAFFLPDAETEAAMTLIEQQWQAIIAEGLGAQYGDAVPLSLLRDELAQRLDQERISQRFLAGPVNICTLMPMRSIPFKVVCLLGMNDGVYPRQLAPLGFDLMSQKPKRGDRSRRDDDRYLFLEALISAQQKLYISYIGRSIQDNSERFPSVLVQELIDYIGQSHYLPGDEALNCDESEARVKAHLTCLHTRMPFDPQNYQPGERQSYAREWLPAASQAGKAHSEFVQPLPFTLPETVPLETLQRFWAHPVRAFFQMRLQVNFRTEDSEIPDTEPFILEGLSRYQINQQLLNALVEQDDAERLFRRFRAAGDLPYGAFGEIFWETQCQEMQQLADRVIACRQPGQSMEIDLACNGVQITGWLPQVQPDGLLRWRPSLLSVAQGMQLWLEHLVYCASGGNGESRLFLRKDGEWRFPPLAAEQALHYLSQLIEGYREGMSAPLLVLPESGGAWLKTCYDAQNDAMLDDDSTLQKARTKFLQAYEGNMMVRGEGDDIWYQRLWRQLTPETMEAIVEQSQRFLLPLFRFNQS.

This sequence belongs to the RecC family. As to quaternary structure, heterotrimer of RecB, RecC and RecD. All subunits contribute to DNA-binding. Interacts with YgbT (Cas1). (Microbial infection) Lambda virus GamS protein interacts with the enzyme without displacing any of the subunits.

After reacting with DNA bearing a Chi site the holoenzyme is disassembled and loses exonuclease activity, DNA unwinding and Chi-directed DNA cleavage; RecB remains complexed with ssDNA, which may prevent holoenzyme reassembly. High levels of Mg(2+) (13 mM MgCl(2+)) or incubation with DNase allow holoenzyme reassembly, suggesting it is DNA bound to RecB that prevents reassembly. With respect to regulation, (Microbial infection) RecBCD is inhibited by the lambda virus gam protein (both GamL and GamS isoforms); in vitro a short preincubation prior to adding DNA results in maximal inhibition. In terms of biological role, a helicase/nuclease that prepares dsDNA breaks (DSB) for recombinational DNA repair. Binds to DSBs and unwinds DNA via a rapid (&gt;1 kb/second) and highly processive (&gt;30 kb) ATP-dependent bidirectional helicase. Unwinds dsDNA until it encounters a Chi (crossover hotspot instigator, 5'-GCTGGTGG-3') sequence from the 3' direction. Cuts ssDNA a few nucleotides 3' to Chi site, by nicking one strand or switching the strand degraded (depending on the reaction conditions). The properties and activities of the enzyme are changed at Chi. The Chi-altered holoenzyme produces a long 3'-ssDNA overhang which facilitates RecA-binding to the ssDNA for homologous DNA recombination and repair. Holoenzyme degrades any linearized DNA that is unable to undergo homologous recombination. In the holoenzyme this subunit almost certainly recognizes the wild-type Chi sequence, when added to isolated RecB increases its ATP-dependent helicase processivity. The RecBC complex requires the RecD subunit for nuclease activity, but can translocate along ssDNA in both directions. The RecBCD complex does not unwind G-quadruplex DNA. In Escherichia coli (strain K12), this protein is RecBCD enzyme subunit RecC.